The sequence spans 334 residues: GTP 3',8-cyclase (334 aa).

One can recognise a Radical SAM core domain in the interval 8–244 (RYGRPLRDLR…GEVAQRHAFA (237 aa)). Residue R17 coordinates GTP. The [4Fe-4S] cluster site is built by C24 and C28. Residue Y30 coordinates S-adenosyl-L-methionine. A [4Fe-4S] cluster-binding site is contributed by C31. Residue R70 participates in GTP binding. G74 provides a ligand contact to S-adenosyl-L-methionine. T101 provides a ligand contact to GTP. S-adenosyl-L-methionine is bound at residue S125. K163 contacts GTP. M197 is a binding site for S-adenosyl-L-methionine. [4Fe-4S] cluster is bound by residues C261 and C264. Residue 266–268 (RAR) coordinates GTP. C278 contacts [4Fe-4S] cluster.

Belongs to the radical SAM superfamily. MoaA family. As to quaternary structure, monomer and homodimer. [4Fe-4S] cluster serves as cofactor.

The enzyme catalyses GTP + AH2 + S-adenosyl-L-methionine = (8S)-3',8-cyclo-7,8-dihydroguanosine 5'-triphosphate + 5'-deoxyadenosine + L-methionine + A + H(+). It functions in the pathway cofactor biosynthesis; molybdopterin biosynthesis. Catalyzes the cyclization of GTP to (8S)-3',8-cyclo-7,8-dihydroguanosine 5'-triphosphate. The chain is GTP 3',8-cyclase from Xanthomonas axonopodis pv. citri (strain 306).